The chain runs to 331 residues: Fe-S cluster assembly protein DRE2 (331 aa).

The segment at methionine 1–serine 146 is N-terminal SAM-like domain. Positions lysine 142–leucine 164 are disordered. The segment covering serine 146–threonine 158 has biased composition (polar residues). A linker region spans residues proline 147–phenylalanine 202. Cysteine 212, cysteine 224, cysteine 227, and cysteine 229 together coordinate [2Fe-2S] cluster. A fe-S binding site A region spans residues cysteine 212 to cysteine 229. Residues cysteine 294, cysteine 297, cysteine 305, and cysteine 308 each contribute to the [4Fe-4S] cluster site. 2 short sequence motifs (cx2C motif) span residues cysteine 294–cysteine 297 and cysteine 305–cysteine 308. A fe-S binding site B region spans residues cysteine 294–cysteine 308.

This sequence belongs to the anamorsin family. In terms of assembly, monomer. Interacts with TAH18. Interacts with MIA40. [2Fe-2S] cluster is required as a cofactor. Requires [4Fe-4S] cluster as cofactor.

Its subcellular location is the cytoplasm. It is found in the mitochondrion intermembrane space. Component of the cytosolic iron-sulfur (Fe-S) protein assembly (CIA) machinery required for the maturation of extramitochondrial Fe-S proteins. Part of an electron transfer chain functioning in an early step of cytosolic Fe-S biogenesis, facilitating the de novo assembly of a [4Fe-4S] cluster on the scaffold complex CFD1-NBP35. Electrons are transferred to DRE2 from NADPH via the FAD- and FMN-containing protein TAH18. TAH18-DRE2 are also required for the assembly of the diferric tyrosyl radical cofactor of ribonucleotide reductase (RNR), probably by providing electrons for reduction during radical cofactor maturation in the catalytic small subunit RNR2. The protein is Fe-S cluster assembly protein DRE2 of Clavispora lusitaniae (strain ATCC 42720) (Yeast).